Consider the following 576-residue polypeptide: Formate--tetrahydrofolate ligase 1 (576 aa).

69–76 contacts ATP; that stretch reads TPLGEGKT.

Belongs to the formate--tetrahydrofolate ligase family.

The catalysed reaction is (6S)-5,6,7,8-tetrahydrofolate + formate + ATP = (6R)-10-formyltetrahydrofolate + ADP + phosphate. It functions in the pathway one-carbon metabolism; tetrahydrofolate interconversion. This Rubrobacter xylanophilus (strain DSM 9941 / JCM 11954 / NBRC 16129 / PRD-1) protein is Formate--tetrahydrofolate ligase 1.